Consider the following 233-residue polypeptide: MKPASTRLLAINAVSKVFHDGACETQVLHEVNLTVHRGEQLAIVGSSGSGKSTLLHIMGTLESPTSGTVLLEGENLHQLSSKRQAQIRNQDLGFIYQFHHLLPEFSALENVAMPAFIQGKNKAQTLAEAKALLERVGLGHRLTHLPSQLSGGERQRVAIARALINKPKLVLADEPTGNLDAVSGEAVYGLIRELAEQLGTAFVVVTHDANLAARMDRQVNMKDGILSQSETHR.

In terms of domain architecture, ABC transporter spans 9-233 (LAINAVSKVF…GILSQSETHR (225 aa)). Residue 45–52 (GSSGSGKS) participates in ATP binding.

The protein belongs to the ABC transporter superfamily. Lipoprotein translocase (TC 3.A.1.125) family. The complex is composed of two ATP-binding proteins (LolD) and two transmembrane proteins (LolC and LolE).

It localises to the cell inner membrane. Part of the ABC transporter complex LolCDE involved in the translocation of mature outer membrane-directed lipoproteins, from the inner membrane to the periplasmic chaperone, LolA. Responsible for the formation of the LolA-lipoprotein complex in an ATP-dependent manner. This chain is Lipoprotein-releasing system ATP-binding protein LolD, found in Shewanella denitrificans (strain OS217 / ATCC BAA-1090 / DSM 15013).